The sequence spans 225 residues: Small ribosomal subunit protein uS3 (225 aa).

The KH type-2 domain occupies 38-106 (IRKFIQSRFS…PVNLNIIEVK (69 aa)).

This sequence belongs to the universal ribosomal protein uS3 family. In terms of assembly, part of the 30S ribosomal subunit. Forms a tight complex with proteins S10 and S14.

Functionally, binds the lower part of the 30S subunit head. Binds mRNA in the 70S ribosome, positioning it for translation. The polypeptide is Small ribosomal subunit protein uS3 (Leptospira borgpetersenii serovar Hardjo-bovis (strain JB197)).